The chain runs to 166 residues: Small ribosomal subunit protein cS23z (166 aa).

The protein belongs to the chloroplast-specific ribosomal protein cS23 family. As to quaternary structure, part of the 30S ribosomal subunit.

It localises to the plastid. The protein localises to the chloroplast. Its function is as follows. Component of the chloroplast ribosome (chloro-ribosome), a dedicated translation machinery responsible for the synthesis of chloroplast genome-encoded proteins, including proteins of the transcription and translation machinery and components of the photosynthetic apparatus. The chain is Small ribosomal subunit protein cS23z from Arabidopsis thaliana (Mouse-ear cress).